The chain runs to 498 residues: L-amino acid oxidase Bs29 (498 aa).

Residues 1-3 (SCA) form the signal peptide. Residues C12 and C175 are joined by a disulfide bond. FAD is bound by residues 45–46 (MS), 65–66 (EA), R73, and 89–92 (GPMR). R92 contributes to the substrate binding site. N174 carries N-linked (GlcNAc...) asparagine glycosylation. H225 is a binding site for substrate. V263 provides a ligand contact to FAD. C333 and C414 are oxidised to a cystine. Y374 contacts substrate. FAD-binding positions include E459 and 466–471 (GWIDST). Substrate is bound at residue 466-467 (GW).

Belongs to the flavin monoamine oxidase family. FIG1 subfamily. Monomer. This is in contrast with most of its orthologs, that are non-covalently linked homodimers. FAD serves as cofactor. In terms of tissue distribution, expressed by the venom gland.

It is found in the secreted. The enzyme catalyses an L-alpha-amino acid + O2 + H2O = a 2-oxocarboxylate + H2O2 + NH4(+). The catalysed reaction is L-leucine + O2 + H2O = 4-methyl-2-oxopentanoate + H2O2 + NH4(+). Catalyzes an oxidative deamination of predominantly hydrophobic and aromatic L-amino acids, thus producing hydrogen peroxide that may contribute to the diverse toxic effects of this enzyme. Shows activity on L-Leu. Damage cell membranes of the Gram-positive bacteria S.aureus (MIC=4 ug/ml and MBC=8 ug/ml) and the Gram-negative bacteria A.baumanni (MIC=2 ug/ml and MBC=4 ug/ml). This antibacterial activity is dependent on the production of hydrogen peroxyde, since it is inhibited by catalase, a hydrogen peroxyde scavenger. The protein is L-amino acid oxidase Bs29 of Bothriechis schlegelii (Eyelash palm pitviper).